Here is a 46-residue protein sequence, read N- to C-terminus: Osteocalcin 2 (46 aa).

In terms of domain architecture, Gla spans 1 to 43 (AVPAGTLSPLQMESLREVCEVNVACDEMADTAGIVAAYTXFYG). At threonine 6 the chain carries Phosphothreonine. Residues glutamate 13, glutamate 17, glutamate 20, and aspartate 26 each contribute to the Ca(2+) site. Residues glutamate 13, glutamate 17, and glutamate 20 each carry the 4-carboxyglutamate modification. An intrachain disulfide couples cysteine 19 to cysteine 25. Glutamate 27 carries the 4-carboxyglutamate modification.

This sequence belongs to the osteocalcin/matrix Gla protein family. In terms of processing, gamma-carboxyglutamate residues are formed by vitamin K dependent carboxylation by GGCX. These residues are essential for the binding of calcium.

It localises to the secreted. Its function is as follows. The carboxylated form is one of the main organic components of the bone matrix, which constitutes 1-2% of the total bone protein. The carboxylated form binds strongly to apatite and calcium. In Solea senegalensis (Senegalese sole), this protein is Osteocalcin 2.